Here is a 566-residue protein sequence, read N- to C-terminus: Mucolipin-2 (566 aa).

The Cytoplasmic segment spans residues 1-65; the sequence is MPGDEETLDL…YRARRQIPWK (65 aa). Residues 66–86 form a helical membrane-spanning segment; that stretch reads LGLQILKIVMVTTQLVRFGLS. The Extracellular segment spans residues 87–288; it reads NQLVVAFKED…ISGSTQRSTH (202 aa). The segment at 107 to 123 is extracellular/lumenal pore loop; it reads KGFSGVDEDDYSCSIYT. 2 disulfides stabilise this stretch: C164-C190 and C243-C274. A helical transmembrane segment spans residues 289-309; that stretch reads YLLVFDVFVIMICLASLILCT. Residues 310 to 346 are Cytoplasmic-facing; the sequence is RSIVLALRLRKRFLNFFLEKYKQRVCGADQWEFVNGW. The chain crosses the membrane as a helical span at residues 347–367; the sequence is YVLVTISDLMTIIGSILKMEI. Topologically, residues 368 to 376 are extracellular; it reads KAKKLTNYD. The chain crosses the membrane as a helical span at residues 377 to 397; sequence VCSILLGTSTLFVWVGVIRYL. Residues 398 to 419 lie on the Cytoplasmic side of the membrane; sequence GYFQTYNVLILTMQASLPKVLR. The helical transmembrane segment at 420–440 threads the bilayer; it reads FCACAGMIYLGYTFCGWIVLG. Over 441-448 the chain is Extracellular; sequence PYHEKFEN. An intramembrane region (pore-forming) is located at residues 449–469; sequence LNIVAECLFSLVNGDDMFATF. The Selectivity filter motif lies at 461–464; that stretch reads NGDD. Topologically, residues 470 to 480 are extracellular; the sequence is AQIQQKSILVW. Residues 481–502 traverse the membrane as a helical segment; the sequence is LFSRLYLYSFISLFIYMVLSLF. At 503–566 the chain is on the cytoplasmic side; sequence IALITDSYHT…RSNDHLILID (64 aa).

It belongs to the transient receptor (TC 1.A.4) family. Polycystin subfamily. MCOLN2 sub-subfamily. Forms homooligomeric complexes; probably tetrameric. Can heterooligomerize with MCOLN1; heteromeric assemblies have different channel properties as compared to the respective homooligomers and may be tissue-specific. Interacts with TMEM176A. Expressed in activated macrophages and microglia (at protein level). In terms of tissue distribution, isoform 1 is widely expressed at very low levels. As to expression, isoform 2 is expressed at high levels in lymphoid tissues (thymus and spleen) and kidney, and at moderate levels in heart, lung, liver and stomach.

The protein localises to the cell membrane. Its subcellular location is the lysosome membrane. The protein resides in the recycling endosome membrane. It carries out the reaction Ca(2+)(in) = Ca(2+)(out). The enzyme catalyses Fe(2+)(in) = Fe(2+)(out). Fe(2+) channel activity is potentiated by low pH. Functionally, nonselective cation channel probably playing a role in the regulation of membrane trafficking events. Acts as a Ca(2+)-permeable cation channel with inwardly rectifying activity. May activate ARF6 and be involved in the trafficking of GPI-anchored cargo proteins to the cell surface via the ARF6-regulated recycling pathway. May play a role in immune processes. In adaptive immunity, TRPML2 and TRPML1 may play redundant roles in the function of the specialized lysosomes of B cells. In the innate immune response, may play a role in the regulation of chemokine secretion and macrophage migration. Through a possible and probably tissue-specific heteromerization with MCOLN1 may be at least in part involved in many lysosome-dependent cellular events. Also functions as a Fe(2+) permeable channel. The chain is Mucolipin-2 (Mcoln2) from Mus musculus (Mouse).